We begin with the raw amino-acid sequence, 79 residues long: Large ribosomal subunit protein uL22 (79 aa).

Belongs to the universal ribosomal protein uL22 family. In terms of assembly, part of the 50S ribosomal subunit.

Its function is as follows. This protein binds specifically to 23S rRNA; its binding is stimulated by other ribosomal proteins, e.g. L4, L17, and L20. It is important during the early stages of 50S assembly. It makes multiple contacts with different domains of the 23S rRNA in the assembled 50S subunit and ribosome. The globular domain of the protein is located near the polypeptide exit tunnel on the outside of the subunit, while an extended beta-hairpin is found that lines the wall of the exit tunnel in the center of the 70S ribosome. The protein is Large ribosomal subunit protein uL22 (rplV) of Clover proliferation phytoplasma.